The primary structure comprises 292 residues: Peroxisomal 2,4-dienoyl-CoA reductase [(3E)-enoyl-CoA-producing] (292 aa).

The residue at position 2 (A2) is an N-acetylalanine. Residues 35–40 (GGGSGI), 60–64 (RSLPR), and D86 contribute to the NADP(+) site. R60 is a binding site for substrate. Residues R88, F118, and 126 to 128 (SFN) contribute to the substrate site. K151 bears the N6-acetyllysine mark. Residues K182 and 208 to 214 (PGPISGT) each bind NADP(+). R219 contacts substrate. S287 carries the post-translational modification Phosphoserine. The short motif at 290 to 292 (AKL) is the Microbody targeting signal element. Residue K291 is modified to N6-acetyllysine.

This sequence belongs to the short-chain dehydrogenases/reductases (SDR) family. 2,4-dienoyl-CoA reductase subfamily. In terms of assembly, monomer, dimer and oligomer.

It localises to the peroxisome. The catalysed reaction is a (2E,4Z)-dienoyl-CoA + NADPH + H(+) = a 4,5-saturated-(3E)-enoyl-CoA + NADP(+). It carries out the reaction a (2E,4E)-dienoyl-CoA + NADPH + H(+) = a 4,5-saturated-(3E)-enoyl-CoA + NADP(+). The enzyme catalyses (2E,4E)-hexadienoyl-CoA + NADPH + H(+) = (3E)-hexenoyl-CoA + NADP(+). It catalyses the reaction (2E,4E)-decadienoyl-CoA + NADPH + H(+) = (3E)-decenoyl-CoA + NADP(+). The catalysed reaction is (2E,4Z,7Z,10Z,13Z,16Z,19Z)-docosaheptaenoyl-CoA + NADPH + H(+) = (3E,7Z,10Z,13Z,16Z,19Z)-docosahexaenoyl-CoA + NADP(+). In terms of biological role, auxiliary enzyme of beta-oxidation. Participates in the degradation of unsaturated fatty enoyl-CoA esters having double bonds in both even- and odd-numbered positions in peroxisome. Catalyzes the NADP-dependent reduction of 2,4-dienoyl-CoA to yield trans-3-enoyl-CoA. Has activity towards short and medium chain 2,4-dienoyl-CoAs, but also towards 2,4,7,10,13,16,19-docosaheptaenoyl-CoA, suggesting that it does not constitute a rate limiting step in the peroxisomal degradation of docosahexaenoic acid. The protein is Peroxisomal 2,4-dienoyl-CoA reductase [(3E)-enoyl-CoA-producing] (DECR2) of Pongo abelii (Sumatran orangutan).